The chain runs to 117 residues: MRKSNPNLVTLIDVLLSESAKNEAPVWKEVAERLAKPRRLQAEVNVSKIEKYAKPNEYVVVPGKVLGSGSITKPVKVAALSFSEKAASKIREAGGVCMKIEELLKENPKGSGVRLMV.

This sequence belongs to the eukaryotic ribosomal protein eL18 family.

This Archaeoglobus fulgidus (strain ATCC 49558 / DSM 4304 / JCM 9628 / NBRC 100126 / VC-16) protein is Large ribosomal subunit protein eL18.